A 747-amino-acid polypeptide reads, in one-letter code: Protein FAM83C (747 aa).

The DUF1669 stretch occupies residues 1-309 (MFGGPGPGVL…LYAESQPVEG (309 aa)). Disordered stretches follow at residues 322–352 (LRPP…SSIK), 374–412 (TGVV…LYRA), 462–484 (LSRF…GRWV), 517–550 (AREV…SPSQ), 588–633 (NQSR…LGHS), 646–672 (GEGP…DEKR), and 692–715 (ARQG…DLVR). A compositionally biased stretch (low complexity) spans 328–350 (ALAFRPDVPSPTSSLPSSTSLSS). The span at 390 to 402 (GQPSLHRQLSDPN) shows a compositional bias: polar residues. Over residues 697–707 (EPGGPKGGHLN) the composition is skewed to gly residues.

Belongs to the FAM83 family. In terms of assembly, may interact with RAF1. Phosphorylated in vitro by CSNK1A1.

Its subcellular location is the cytoplasm. Its function is as follows. May play a role in MAPK signaling. This chain is Protein FAM83C, found in Homo sapiens (Human).